Here is a 495-residue protein sequence, read N- to C-terminus: Ectonucleoside triphosphate diphosphohydrolase 2 (495 aa).

Residues 2–4 (ARR) are Cytoplasmic-facing. The chain crosses the membrane as a helical span at residues 5–25 (AAAVLLLLALGCLLGILLLCL). Topologically, residues 26–465 (GSGDARGPPS…SHRSMLYNYW (440 aa)) are extracellular. A glycan (N-linked (GlcNAc...) asparagine) is linked at N62. Cysteines 73 and 97 form a disulfide. E162 (proton acceptor) is an active-site residue. An ATP-binding site is contributed by 201–205 (GASTQ). Intrachain disulfides connect C239/C286, C267/C311, C324/C329, and C378/C400. N297 carries N-linked (GlcNAc...) asparagine glycosylation. N418 and N444 each carry an N-linked (GlcNAc...) asparagine glycan. A helical membrane pass occupies residues 466–486 (VILILLFVITTLTALLTAVYL). Residues 487 to 495 (LRRSKSSTI) lie on the Cytoplasmic side of the membrane.

The protein belongs to the GDA1/CD39 NTPase family. The cofactor is Ca(2+). It depends on Mg(2+) as a cofactor.

The protein localises to the membrane. Its function is as follows. In the nervous system, could hydrolyze ATP and other nucleotides to regulate purinergic neurotransmission. Hydrolyzes ADP only to a marginal extent. The polypeptide is Ectonucleoside triphosphate diphosphohydrolase 2 (ENTPD2) (Gallus gallus (Chicken)).